The primary structure comprises 295 residues: Ankyrin repeat and SOCS box protein 17 (295 aa).

Residues 146-176 (SGITPLLYVAQTRQSNILKILLQYGILEREN) form an ANK repeat. An SOCS box domain is found at 232–295 (LGRRPIISNW…CLQNYLNLES (64 aa)).

The protein belongs to the ankyrin SOCS box (ASB) family.

It participates in protein modification; protein ubiquitination. In terms of biological role, may be a substrate-recognition component of a SCF-like ECS (Elongin-Cullin-SOCS-box protein) E3 ubiquitin-protein ligase complex which mediates the ubiquitination and subsequent proteasomal degradation of target proteins. The protein is Ankyrin repeat and SOCS box protein 17 (ASB17) of Bos taurus (Bovine).